The sequence spans 1056 residues: PH and SEC7 domain-containing protein 4 (1056 aa).

A compositionally biased stretch (basic and acidic residues) spans 25-42 (LEPHPGECPRETCSHEDP). Disordered regions lie at residues 25–71 (LEPH…SGVE), 87–149 (CQEQ…QNRS), 195–239 (LPGD…QWGA), 340–362 (GAPAAPPGHGESEGDRLGPAPSA), 388–533 (VQPW…GDVQ), and 546–581 (LRTPMNSSWLPGSPMPQAQSPEEGQRPPAGDKLANG). Polar residues-rich tracts occupy residues 88–99 (QEQTRATDPPES) and 128–137 (NTASPGSPVN). A phosphoserine mark is found at Ser-131, Ser-134, and Ser-143. Acidic residues predominate over residues 207 to 220 (ENEDSGEDSSEPEG). At Ser-413 the chain carries Phosphoserine. A compositionally biased stretch (basic and acidic residues) spans 414–423 (QDRDEREGGH). Residues 438-456 (RSPASSPEPSSPESESRGP) show a composition bias toward low complexity. Phosphoserine occurs at positions 448, 469, and 491. 2 stretches are compositionally biased toward polar residues: residues 466–476 (QEGSPQLQHHS) and 486–502 (DASQSSLLETDGEQPSS). Over residues 504 to 522 (KKKEAGEAPKPGEEVKSEG) the composition is skewed to basic and acidic residues. In terms of domain architecture, SEC7 spans 544 to 736 (ENLRTPMNSS…KALYWSIRSE (193 aa)). Residues 548–567 (TPMNSSWLPGSPMPQAQSPE) are compositionally biased toward polar residues. The PH domain maps to 776–892 (PTYKQGILAR…WIARINLAAA (117 aa)). A coiled-coil region spans residues 921 to 976 (SSLEEQHRSHENCLDAAADDLLDLQRNLPERRGRGRELEEHRLRKEYLEYEKTRYE). A disordered region spans residues 1004-1056 (AGGTREPKLSLKKSHSSPSLHQDEAPTTAKVKRNISERRTYRKIIPKRNRNQL). Phosphoserine is present on residues Ser-1019 and Ser-1022. Positions 1043–1056 (TYRKIIPKRNRNQL) are enriched in basic residues.

As to expression, widely expressed. Highest levels of expression are found in placenta, pancreas, spleen, thymus and peripheral blood.

The protein localises to the cell membrane. Its subcellular location is the cell projection. The protein resides in the ruffle membrane. Its function is as follows. Guanine nucleotide exchange factor for ARF6 and ARL14/ARF7. Through ARL14 activation, controls the movement of MHC class II-containing vesicles along the actin cytoskeleton in dendritic cells. Involved in membrane recycling. Interacts with several phosphatidylinositol phosphate species, including phosphatidylinositol 3,4-bisphosphate, phosphatidylinositol 3,5-bisphosphate and phosphatidylinositol 4,5-bisphosphate. The polypeptide is PH and SEC7 domain-containing protein 4 (PSD4) (Homo sapiens (Human)).